Here is a 115-residue protein sequence, read N- to C-terminus: uncharacterized protein (115 aa).

In terms of domain architecture, CHCH spans 63–108; the sequence is GSPCGFEFREAITCQKTNSDGEIEQGACGKELMSFMECVTRTQCFG. Short sequence motifs (cx9C motif) lie at residues 66–76 and 90–100; these read CGFEFREAITC and CGKELMSFMEC. 2 cysteine pairs are disulfide-bonded: cysteine 66–cysteine 100 and cysteine 76–cysteine 90.

This is an uncharacterized protein from Caenorhabditis elegans.